We begin with the raw amino-acid sequence, 110 residues long: Large ribosomal subunit protein uL22 (110 aa).

The protein belongs to the universal ribosomal protein uL22 family. As to quaternary structure, part of the 50S ribosomal subunit.

This protein binds specifically to 23S rRNA; its binding is stimulated by other ribosomal proteins, e.g. L4, L17, and L20. It is important during the early stages of 50S assembly. It makes multiple contacts with different domains of the 23S rRNA in the assembled 50S subunit and ribosome. Functionally, the globular domain of the protein is located near the polypeptide exit tunnel on the outside of the subunit, while an extended beta-hairpin is found that lines the wall of the exit tunnel in the center of the 70S ribosome. This chain is Large ribosomal subunit protein uL22, found in Marinobacter nauticus (strain ATCC 700491 / DSM 11845 / VT8) (Marinobacter aquaeolei).